Reading from the N-terminus, the 561-residue chain is DNA ligase B (561 aa).

K125 (N6-AMP-lysine intermediate) is an active-site residue.

Belongs to the NAD-dependent DNA ligase family. LigB subfamily.

It carries out the reaction NAD(+) + (deoxyribonucleotide)n-3'-hydroxyl + 5'-phospho-(deoxyribonucleotide)m = (deoxyribonucleotide)n+m + AMP + beta-nicotinamide D-nucleotide.. Its function is as follows. Catalyzes the formation of phosphodiester linkages between 5'-phosphoryl and 3'-hydroxyl groups in double-stranded DNA using NAD as a coenzyme and as the energy source for the reaction. The polypeptide is DNA ligase B (Salmonella schwarzengrund (strain CVM19633)).